The primary structure comprises 334 residues: Chemotactic signal transduction system substrate-binding protein CosB (334 aa).

Positions 1–29 are cleaved as a signal peptide; it reads MMDTPEHASTSSRRQLLGMLAAGGTTAVA.

This sequence belongs to the OsmX family.

The protein resides in the cell membrane. Its function is as follows. Mediates chemotaxis towards compatible osmolytes. May function as a receptor that binds the osmolytes and transduces a signal to CosT. Has probably no additional role in transport. The polypeptide is Chemotactic signal transduction system substrate-binding protein CosB (cosB) (Halobacterium salinarum (strain ATCC 29341 / DSM 671 / R1)).